We begin with the raw amino-acid sequence, 471 residues long: Ribosomal protein uS12 methylthiotransferase RimO (471 aa).

One can recognise an MTTase N-terminal domain in the interval 2–122 (IKVSLISLGC…VAPIIQEIYA (121 aa)). 6 residues coordinate [4Fe-4S] cluster: C11, C47, C84, C166, C170, and C173. One can recognise a Radical SAM core domain in the interval 152–395 (LTPKHFAYVK…MALQKQIAAD (244 aa)). One can recognise a TRAM domain in the interval 398-458 (KTYVGRTLRV…DYDLLALPPG (61 aa)).

This sequence belongs to the methylthiotransferase family. RimO subfamily. [4Fe-4S] cluster is required as a cofactor.

It localises to the cytoplasm. The enzyme catalyses L-aspartate(89)-[ribosomal protein uS12]-hydrogen + (sulfur carrier)-SH + AH2 + 2 S-adenosyl-L-methionine = 3-methylsulfanyl-L-aspartate(89)-[ribosomal protein uS12]-hydrogen + (sulfur carrier)-H + 5'-deoxyadenosine + L-methionine + A + S-adenosyl-L-homocysteine + 2 H(+). Catalyzes the methylthiolation of an aspartic acid residue of ribosomal protein uS12. The chain is Ribosomal protein uS12 methylthiotransferase RimO from Opitutus terrae (strain DSM 11246 / JCM 15787 / PB90-1).